Consider the following 121-residue polypeptide: U15-barytoxin-Tl1b (121 aa).

An N-terminal signal peptide occupies residues 1–16 (MKLFMVLVASFAFAVA). Disulfide bonds link Cys-54-Cys-72, Cys-65-Cys-78, Cys-69-Cys-119, and Cys-71-Cys-90.

The protein belongs to the neurotoxin 03 (Tx2) family. 03 subfamily. As to expression, expressed by the venom gland.

It is found in the secreted. Functionally, ion channel inhibitor. In Trittame loki (Brush-footed trapdoor spider), this protein is U15-barytoxin-Tl1b.